Here is a 519-residue protein sequence, read N- to C-terminus: Serine/threonine-protein kinase RIO3 (519 aa).

5 positions are modified to phosphoserine: Ser8, Ser112, Ser125, Ser127, and Ser128. The tract at residues 122 to 159 is disordered; sequence FEDSDSSEDEVDWQDTRDDPYRPAKPIPTPKKGFIGKG. Over residues 124-134 the composition is skewed to acidic residues; the sequence is DSDSSEDEVDW. One can recognise a Protein kinase domain in the interval 251–519; the sequence is ETITGCISTG…DGSPPVLSAD (269 aa). ATP is bound by residues 257–265 and Lys290; that span reads ISTGKESVV. The active-site Proton acceptor is Asp406. Ser512 carries the phosphoserine modification.

It belongs to the protein kinase superfamily. RIO-type Ser/Thr kinase family. Interacts with CASP10. Interacts with IRF3; RIOK3 probably mediates the interaction of TBK1 with IRF3. Associated with 40S pre-ribosomal particles. It depends on Mg(2+) as a cofactor. Autophosphorylated (in vitro).

The protein resides in the cytoplasm. The catalysed reaction is L-seryl-[protein] + ATP = O-phospho-L-seryl-[protein] + ADP + H(+). The enzyme catalyses L-threonyl-[protein] + ATP = O-phospho-L-threonyl-[protein] + ADP + H(+). Its function is as follows. Involved in regulation of type I interferon (IFN)-dependent immune response which plays a critical role in the innate immune response against DNA and RNA viruses. May act as an adapter protein essential for the recruitment of TBK1 to IRF3. Phosphorylates IFIH1 on 'Ser-828' interfering with IFIH1 filament assembly on long dsRNA and resulting in attenuated IFIH1-signaling. Can inhibit CASP10 isoform 7-mediated activation of the NF-kappaB signaling pathway. May play a role in the biogenesis of the 40S ribosomal subunit. Involved in the processing of 21S pre-rRNA to the mature 18S rRNA. This is Serine/threonine-protein kinase RIO3 (Riok3) from Mus musculus (Mouse).